We begin with the raw amino-acid sequence, 631 residues long: DNA mismatch repair protein MutL (631 aa).

A disordered region spans residues G389–A423.

The protein belongs to the DNA mismatch repair MutL/HexB family.

In terms of biological role, this protein is involved in the repair of mismatches in DNA. It is required for dam-dependent methyl-directed DNA mismatch repair. May act as a 'molecular matchmaker', a protein that promotes the formation of a stable complex between two or more DNA-binding proteins in an ATP-dependent manner without itself being part of a final effector complex. In Shewanella loihica (strain ATCC BAA-1088 / PV-4), this protein is DNA mismatch repair protein MutL.